A 224-amino-acid polypeptide reads, in one-letter code: Holliday junction branch migration complex subunit RuvA (224 aa).

The segment at 1–64 (MIGKVAGILD…EDLLQLFGFP (64 aa)) is domain I. Residues 65–143 (TMIEKEWHRL…ALMAMGGGTA (79 aa)) form a domain II region. Residues 141-185 (GTAALAPSEPPEPEPGTSSGSRRKTRAPEPPRPSHTADALSALAN) form a disordered region. The flexible linker stretch occupies residues 144-170 (ALAPSEPPEPEPGTSSGSRRKTRAPEP). The domain III stretch occupies residues 171–224 (PRPSHTADALSALANLGYQPTDAAQAVAQAAGESPDADTAALIRAALKLLAPKS).

The protein belongs to the RuvA family. Homotetramer. Forms an RuvA(8)-RuvB(12)-Holliday junction (HJ) complex. HJ DNA is sandwiched between 2 RuvA tetramers; dsDNA enters through RuvA and exits via RuvB. An RuvB hexamer assembles on each DNA strand where it exits the tetramer. Each RuvB hexamer is contacted by two RuvA subunits (via domain III) on 2 adjacent RuvB subunits; this complex drives branch migration. In the full resolvosome a probable DNA-RuvA(4)-RuvB(12)-RuvC(2) complex forms which resolves the HJ.

It localises to the cytoplasm. In terms of biological role, the RuvA-RuvB-RuvC complex processes Holliday junction (HJ) DNA during genetic recombination and DNA repair, while the RuvA-RuvB complex plays an important role in the rescue of blocked DNA replication forks via replication fork reversal (RFR). RuvA specifically binds to HJ cruciform DNA, conferring on it an open structure. The RuvB hexamer acts as an ATP-dependent pump, pulling dsDNA into and through the RuvAB complex. HJ branch migration allows RuvC to scan DNA until it finds its consensus sequence, where it cleaves and resolves the cruciform DNA. This Cereibacter sphaeroides (strain ATCC 17029 / ATH 2.4.9) (Rhodobacter sphaeroides) protein is Holliday junction branch migration complex subunit RuvA.